We begin with the raw amino-acid sequence, 78 residues long: Pigment-dispersing hormone 2 peptides (78 aa).

Residues 1–21 (MRSGVFVAVLVVVVFALLTQG) form the signal peptide. An Alanine amide modification is found at Ala-75.

It belongs to the arthropod PDH family. In terms of tissue distribution, eyestalk sinus gland.

Its subcellular location is the secreted. Its function is as follows. The pigment-dispersing hormone causes the migration of the distal retinal pigment into the proximal end of the pigment chromatophore cells and thus decreases the amount of light entering the retinulas. May also function as a neurotransmitter and/or neuromodulator. The polypeptide is Pigment-dispersing hormone 2 peptides (PDH2) (Callinectes sapidus (Blue crab)).